The chain runs to 532 residues: Arginine--tRNA ligase (532 aa).

The 'HIGH' region signature appears at 122-132 (ANPTGPLHVAS).

The protein belongs to the class-I aminoacyl-tRNA synthetase family. In terms of assembly, monomer.

The protein resides in the cytoplasm. The catalysed reaction is tRNA(Arg) + L-arginine + ATP = L-arginyl-tRNA(Arg) + AMP + diphosphate. The sequence is that of Arginine--tRNA ligase from Elusimicrobium minutum (strain Pei191).